A 65-amino-acid polypeptide reads, in one-letter code: UPF0337 protein PA4738 (65 aa).

The protein belongs to the UPF0337 (CsbD) family.

The polypeptide is UPF0337 protein PA4738 (Pseudomonas aeruginosa (strain ATCC 15692 / DSM 22644 / CIP 104116 / JCM 14847 / LMG 12228 / 1C / PRS 101 / PAO1)).